The sequence spans 641 residues: Mediator of RNA polymerase II transcription subunit 17 (641 aa).

A coiled-coil region spans residues 159-186 (RLQSFNAAADKLLKSAARLETEVASETR).

The protein belongs to the Mediator complex subunit 17 family. Component of the Mediator complex.

It localises to the nucleus. Component of the Mediator complex, a coactivator involved in the regulated transcription of nearly all RNA polymerase II-dependent genes. Mediator functions as a bridge to convey information from gene-specific regulatory proteins to the basal RNA polymerase II transcription machinery. Mediator is recruited to promoters by direct interactions with regulatory proteins and serves as a scaffold for the assembly of a functional preinitiation complex with RNA polymerase II and the general transcription factors. The polypeptide is Mediator of RNA polymerase II transcription subunit 17 (srb4) (Aspergillus clavatus (strain ATCC 1007 / CBS 513.65 / DSM 816 / NCTC 3887 / NRRL 1 / QM 1276 / 107)).